A 456-amino-acid polypeptide reads, in one-letter code: Trigger factor (456 aa).

The region spanning 192 to 277 (GDTVVIDFVG…IHEVKTKEVP (86 aa)) is the PPIase FKBP-type domain.

The protein belongs to the FKBP-type PPIase family. Tig subfamily.

The protein resides in the cytoplasm. The enzyme catalyses [protein]-peptidylproline (omega=180) = [protein]-peptidylproline (omega=0). Involved in protein export. Acts as a chaperone by maintaining the newly synthesized protein in an open conformation. Functions as a peptidyl-prolyl cis-trans isomerase. The protein is Trigger factor of Streptococcus pyogenes serotype M12 (strain MGAS9429).